The sequence spans 60 residues: MNFTKLFILVAIAVLVVVGVQPVDGAPRWKFGKRLEKLGRNVFRAAKKALPVIAGYKALG.

An N-terminal signal peptide occupies residues 1–25; the sequence is MNFTKLFILVAIAVLVVVGVQPVDG. Leu59 carries the leucine amide modification.

It belongs to the cecropin family.

It is found in the secreted. Functionally, cecropins have lytic and antibacterial activity against several Gram-positive and Gram-negative bacteria. The protein is Cecropin-B (CecB) of Anopheles gambiae (African malaria mosquito).